Consider the following 212-residue polypeptide: Orotate phosphoribosyltransferase (212 aa).

Residues arginine 97, lysine 101, histidine 103, and 123 to 131 contribute to the 5-phospho-alpha-D-ribose 1-diphosphate site; that span reads EDLISTGGS. Serine 127 is an orotate binding site.

The protein belongs to the purine/pyrimidine phosphoribosyltransferase family. PyrE subfamily. As to quaternary structure, homodimer. It depends on Mg(2+) as a cofactor.

The enzyme catalyses orotidine 5'-phosphate + diphosphate = orotate + 5-phospho-alpha-D-ribose 1-diphosphate. The protein operates within pyrimidine metabolism; UMP biosynthesis via de novo pathway; UMP from orotate: step 1/2. Its function is as follows. Catalyzes the transfer of a ribosyl phosphate group from 5-phosphoribose 1-diphosphate to orotate, leading to the formation of orotidine monophosphate (OMP). This is Orotate phosphoribosyltransferase from Phocaeicola vulgatus (strain ATCC 8482 / DSM 1447 / JCM 5826 / CCUG 4940 / NBRC 14291 / NCTC 11154) (Bacteroides vulgatus).